Consider the following 382-residue polypeptide: Gap junction alpha-1 protein (382 aa).

Over 2 to 23 (GDWSALGKLLDKVQAYSTAGGK) the chain is Cytoplasmic. Ser-5 carries the post-translational modification Phosphoserine. The helical transmembrane segment at 24 to 44 (VWLSVLFIFRILLLGTAVESA) threads the bilayer. The Extracellular portion of the chain corresponds to 45 to 76 (WGDEQSAFRCNTQQPGCENVCYDKSFPISHVR). Intrachain disulfides connect Cys-54-Cys-192 and Cys-187-Cys-198. A helical transmembrane segment spans residues 77-97 (FWVLQIIFVSVPTLLYLAHVF). Over 98–155 (YVMRKEEKLNKKEEELKVAQTDGVNVEMHLKQIEIKKFKYGIEEHGKVKMRGGLLRTY) the chain is Cytoplasmic. Lys-144 is covalently cross-linked (Glycyl lysine isopeptide (Lys-Gly) (interchain with G-Cter in SUMO)). Residues 156–176 (IISILFKSVFEVAFLLIQWYI) traverse the membrane as a helical segment. The Extracellular portion of the chain corresponds to 177-207 (YGFSLSAVYTCKRDPCPHQVDCFLSRPTEKT). Residues 208-228 (IFIIFMLVVSLVSLALNIIEL) traverse the membrane as a helical segment. Residues 229–382 (FYVFFKGVKD…SRPRPDDLEI (154 aa)) are Cytoplasmic-facing. Lys-237 is covalently cross-linked (Glycyl lysine isopeptide (Lys-Gly) (interchain with G-Cter in SUMO)). Residues 244–382 (SDPYHATTGP…SRPRPDDLEI (139 aa)) are interaction with NOV. At Tyr-247 the chain carries Phosphotyrosine. Residues Ser-255, Ser-257, and Ser-262 each carry the phosphoserine modification. Residues 264-382 (KYAYFNGCSS…SRPRPDDLEI (119 aa)) form an interaction with UBQLN4 region. Cys-271 carries the post-translational modification S-nitrosocysteine. Position 275 is a phosphothreonine (Thr-275). Phosphoserine is present on residues Ser-306, Ser-314, and Ser-325. Residues 317–332 (QNRMGQAGSTISNSHA) are compositionally biased toward polar residues. The interval 317–382 (QNRMGQAGST…SRPRPDDLEI (66 aa)) is disordered. Position 326 is a phosphothreonine (Thr-326). A phosphoserine mark is found at Ser-328, Ser-330, Ser-341, and Ser-365. Over residues 362–374 (RPSSRASSRASSR) the composition is skewed to low complexity. The residue at position 368 (Ser-368) is a Phosphoserine; by PKC/PRKCG and PKC/PRKCD. Residues Ser-369 and Ser-373 each carry the phosphoserine modification.

It belongs to the connexin family. Alpha-type (group II) subfamily. In terms of assembly, a connexon is composed of a hexamer of connexins. Interacts with CSNK1D. Interacts with RIC1/CIP150. Interacts (via C-terminus) with TJP1. Interacts (via C-terminus) with SRC (via SH3 domain). Interacts (not ubiquitinated) with UBQLN4 (via UBA domain). Interacts with CNST. Interacts with SGSM3. Interacts with NOV. Interacts with TMEM65. Interacts with ANK3/ANKG and PKP2. Phosphorylation at Ser-325, Ser-328 and Ser-330 by CK1 modulates gap junction assembly. Phosphorylated at Ser-368 by PRKCG; phosphorylation induces disassembly of gap junction plaques and inhibition of gap junction activity. Phosphorylation at Ser-368 by PRKCD triggers its internalization into small vesicles leading to proteasome-mediated degradation. In terms of processing, sumoylated with SUMO1, SUMO2 and SUMO3, which may regulate the level of functional Cx43 gap junctions at the plasma membrane. May be desumoylated by SENP1 or SENP2. Post-translationally, acetylated in the developing cortex; leading to delocalization from the cell membrane. S-nitrosylation at Cys-271 is enriched at the muscle endothelial gap junction in arteries, it augments channel permeability and may regulate of smooth muscle cell to endothelial cell communication. In terms of tissue distribution, expressed in heart, non-sensory epithelial cells, and in fibrocytes of the spiral ligament and the spiral limbus. Expressed in bladder smooth muscle cells (at protein level). Expressed in astrocytes (at protein level).

It is found in the cell membrane. The protein localises to the cell junction. It localises to the gap junction. Its subcellular location is the endoplasmic reticulum. In terms of biological role, gap junction protein that acts as a regulator of bladder capacity. A gap junction consists of a cluster of closely packed pairs of transmembrane channels, the connexons, through which materials of low MW diffuse from one cell to a neighboring cell. Negative regulator of bladder functional capacity: acts by enhancing intercellular electrical and chemical transmission, thus sensitizing bladder muscles to cholinergic neural stimuli and causing them to contract. May play a role in cell growth inhibition through the regulation of NOV expression and localization. Plays an essential role in gap junction communication in the ventricles. Its function is as follows. Connexin 43 is possibly the ATP-induced pore of mouse macrophages. In Mus musculus (Mouse), this protein is Gap junction alpha-1 protein (Gja1).